A 227-amino-acid chain; its full sequence is Cytochrome c oxidase subunit 2 (227 aa).

The Mitochondrial intermembrane segment spans residues 1–14 (MAYPFQLGLQDATS). The chain crosses the membrane as a helical span at residues 15 to 45 (PIMEELLHFHDHTLMIVFLISSLVLYIISLM). At 46–59 (LTTKLTHTSTMDAQ) the chain is on the mitochondrial matrix side. The helical transmembrane segment at 60–87 (EVETVWTILPAIILISIALPSLRILYMM) threads the bilayer. The Mitochondrial intermembrane segment spans residues 88–227 (DEINNPSLTV…YFEAWSTLMM (140 aa)). Positions 161, 196, 198, 200, 204, and 207 each coordinate Cu cation. Residue glutamate 198 participates in Mg(2+) binding. Position 218 is a phosphotyrosine (tyrosine 218).

The protein belongs to the cytochrome c oxidase subunit 2 family. As to quaternary structure, component of the cytochrome c oxidase (complex IV, CIV), a multisubunit enzyme composed of 14 subunits. The complex is composed of a catalytic core of 3 subunits MT-CO1, MT-CO2 and MT-CO3, encoded in the mitochondrial DNA, and 11 supernumerary subunits COX4I, COX5A, COX5B, COX6A, COX6B, COX6C, COX7A, COX7B, COX7C, COX8 and NDUFA4, which are encoded in the nuclear genome. The complex exists as a monomer or a dimer and forms supercomplexes (SCs) in the inner mitochondrial membrane with NADH-ubiquinone oxidoreductase (complex I, CI) and ubiquinol-cytochrome c oxidoreductase (cytochrome b-c1 complex, complex III, CIII), resulting in different assemblies (supercomplex SCI(1)III(2)IV(1) and megacomplex MCI(2)III(2)IV(2)). Found in a complex with TMEM177, COA6, COX18, COX20, SCO1 and SCO2. Interacts with TMEM177 in a COX20-dependent manner. Interacts with COX20. Interacts with COX16. It depends on Cu cation as a cofactor.

It localises to the mitochondrion inner membrane. The enzyme catalyses 4 Fe(II)-[cytochrome c] + O2 + 8 H(+)(in) = 4 Fe(III)-[cytochrome c] + 2 H2O + 4 H(+)(out). Functionally, component of the cytochrome c oxidase, the last enzyme in the mitochondrial electron transport chain which drives oxidative phosphorylation. The respiratory chain contains 3 multisubunit complexes succinate dehydrogenase (complex II, CII), ubiquinol-cytochrome c oxidoreductase (cytochrome b-c1 complex, complex III, CIII) and cytochrome c oxidase (complex IV, CIV), that cooperate to transfer electrons derived from NADH and succinate to molecular oxygen, creating an electrochemical gradient over the inner membrane that drives transmembrane transport and the ATP synthase. Cytochrome c oxidase is the component of the respiratory chain that catalyzes the reduction of oxygen to water. Electrons originating from reduced cytochrome c in the intermembrane space (IMS) are transferred via the dinuclear copper A center (CU(A)) of subunit 2 and heme A of subunit 1 to the active site in subunit 1, a binuclear center (BNC) formed by heme A3 and copper B (CU(B)). The BNC reduces molecular oxygen to 2 water molecules using 4 electrons from cytochrome c in the IMS and 4 protons from the mitochondrial matrix. The protein is Cytochrome c oxidase subunit 2 (MT-CO2) of Lycaon pictus (African wild dog).